The sequence spans 415 residues: Hydroxysteroid dehydrogenase-like protein 2 (415 aa).

NADP(+)-binding positions include 17 to 23 (GASRGIG), Lys42, and Asp74. Tyr168 (proton acceptor) is an active-site residue. Lys172 is a binding site for NADP(+). Residues 304–412 (AGPVSEMFNT…KLEKMMAMMK (109 aa)) form the SCP2 domain.

This sequence belongs to the short-chain dehydrogenases/reductases (SDR) family.

It is found in the peroxisome. The protein resides in the mitochondrion. Functionally, has apparently no steroid dehydrogenase activity. Might act as a metabolic regulator that affects systemic adaptation to nutritional cues. This chain is Hydroxysteroid dehydrogenase-like protein 2 (hsdl2), found in Danio rerio (Zebrafish).